A 123-amino-acid polypeptide reads, in one-letter code: Large ribosomal subunit protein bL12 (123 aa).

The protein belongs to the bacterial ribosomal protein bL12 family. In terms of assembly, homodimer. Part of the ribosomal stalk of the 50S ribosomal subunit. Forms a multimeric L10(L12)X complex, where L10 forms an elongated spine to which 2 to 4 L12 dimers bind in a sequential fashion. Binds GTP-bound translation factors.

Forms part of the ribosomal stalk which helps the ribosome interact with GTP-bound translation factors. Is thus essential for accurate translation. The polypeptide is Large ribosomal subunit protein bL12 (Chlorobium phaeovibrioides (strain DSM 265 / 1930) (Prosthecochloris vibrioformis (strain DSM 265))).